A 394-amino-acid polypeptide reads, in one-letter code: Elongation factor Tu (394 aa).

Residues 10 to 205 form the tr-type G domain; it reads KPHMNVGTIG…SMDNYFDLPE (196 aa). A G1 region spans residues 19-26; sequence GHVDHGKT. 19–26 is a GTP binding site; it reads GHVDHGKT. Threonine 26 is a binding site for Mg(2+). The segment at 61-65 is G2; sequence GITIN. A G3 region spans residues 82 to 85; that stretch reads DCPG. Residues 82–86 and 137–140 contribute to the GTP site; these read DCPGH and NKLD. The G4 stretch occupies residues 137 to 140; the sequence is NKLD. Residues 173–175 are G5; that stretch reads SAF.

The protein belongs to the TRAFAC class translation factor GTPase superfamily. Classic translation factor GTPase family. EF-Tu/EF-1A subfamily. As to quaternary structure, monomer.

It is found in the cytoplasm. The enzyme catalyses GTP + H2O = GDP + phosphate + H(+). GTP hydrolase that promotes the GTP-dependent binding of aminoacyl-tRNA to the A-site of ribosomes during protein biosynthesis. The sequence is that of Elongation factor Tu from Borreliella burgdorferi (strain ATCC 35210 / DSM 4680 / CIP 102532 / B31) (Borrelia burgdorferi).